We begin with the raw amino-acid sequence, 94 residues long: Co-chaperonin GroES (94 aa).

The protein belongs to the GroES chaperonin family. As to quaternary structure, heptamer of 7 subunits arranged in a ring. Interacts with the chaperonin GroEL.

It localises to the cytoplasm. Functionally, together with the chaperonin GroEL, plays an essential role in assisting protein folding. The GroEL-GroES system forms a nano-cage that allows encapsulation of the non-native substrate proteins and provides a physical environment optimized to promote and accelerate protein folding. GroES binds to the apical surface of the GroEL ring, thereby capping the opening of the GroEL channel. The chain is Co-chaperonin GroES from Bacillus cytotoxicus (strain DSM 22905 / CIP 110041 / 391-98 / NVH 391-98).